Reading from the N-terminus, the 369-residue chain is Capsid protein (369 aa).

The protein localises to the host nucleus. It localises to the virion. Its function is as follows. Self-assembles to form the virion icosahedral capsid. The sequence is that of Capsid protein from Avon-Heathcote Estuary associated kieseladnavirus (AHEaBV).